A 586-amino-acid polypeptide reads, in one-letter code: U-box domain-containing protein 73 (586 aa).

Residues 21 to 122 are disordered; it reads KADMSGLQRS…AAGADDGPTR (102 aa). A compositionally biased stretch (low complexity) spans 50 to 60; that stretch reads RSAPTSPLRTP. The 77-residue stretch at 182-258 folds into the U-box domain; sequence PIPIAHDGTL…SAWCLDHSDL (77 aa).

It carries out the reaction S-ubiquitinyl-[E2 ubiquitin-conjugating enzyme]-L-cysteine + [acceptor protein]-L-lysine = [E2 ubiquitin-conjugating enzyme]-L-cysteine + N(6)-ubiquitinyl-[acceptor protein]-L-lysine.. Its pathway is protein modification; protein ubiquitination. Its function is as follows. Possesses E3 ubiquitin-protein ligase in vitro. This chain is U-box domain-containing protein 73 (PUB73), found in Oryza sativa subsp. japonica (Rice).